Reading from the N-terminus, the 265-residue chain is Eukaryotic translation initiation factor 3 subunit J (265 aa).

The disordered stretch occupies residues 1–71 (MSWDDEAING…KESSADRALL (71 aa)). Positions 23-32 (WDAEIGDDEP) are enriched in acidic residues. Residues 42–71 (EEKKPAPKPKKEQPKKVKKGKESSADRALL) show a composition bias toward basic and acidic residues. At S65 the chain carries Phosphoserine. Phosphothreonine is present on T75. At S92 the chain carries Phosphoserine. The interval 219–265 (VRGGTATGGAGKKKVKGKTNLGGAFKKDQDFDLDGPDDFEFGDDDFM) is disordered. R220 is subject to Omega-N-methylarginine. Over residues 249–265 (FDLDGPDDFEFGDDDFM) the composition is skewed to acidic residues.

It belongs to the eIF-3 subunit J family. In terms of assembly, probable component of the eukaryotic translation initiation factor 3 (eIF-3) complex. Is not part of the eIF-3 core complex, with which it is associated in substochiometric amounts.

It is found in the cytoplasm. Its function is as follows. Component of the eukaryotic translation initiation factor 3 (eIF-3) complex, which is involved in protein synthesis of a specialized repertoire of mRNAs and, together with other initiation factors, stimulates binding of mRNA and methionyl-tRNAi to the 40S ribosome. The eIF-3 complex specifically targets and initiates translation of a subset of mRNAs involved in cell proliferation. The protein is Eukaryotic translation initiation factor 3 subunit J of Saccharomyces cerevisiae (strain ATCC 204508 / S288c) (Baker's yeast).